Reading from the N-terminus, the 264-residue chain is MTVSSAPYCLAGQVALVTGSGRGIGAAIAVELGRLGASVVVNYANSSAAAEKVVAEIQSLGSAAIAIQADVREVSQTVRLMDEAVAHFGGLDIVCSNAGVVSFGHLGEVTEEEFDRVFSLNTRGQFFVAREAYRHLNEGGRIILMSSNTAHDFSVPKHSLYSGSKGAIDSFVRVFAKDCGDKKITVNAVAPGGTVTDMFHAVSHHYIPNGEKYTAEERQQMAAHASPLMRNGFPLDIARVVCFLASKEGEWVNGKSLTVDGGAA.

Ile24, Asp70, Asn97, and Arg130 together coordinate NADP(+). Residues Ser146, Ser147, and Tyr161 each act as proton donor in the active site. The NADP(+) site is built by Tyr161, Lys165, and Thr196. Lys165 acts as the Lowers pKa of active site Tyr in catalysis.

The protein belongs to the short-chain dehydrogenases/reductases (SDR) family.

The catalysed reaction is 3,8,9,10-tetrahydroxy-6-methyl-1,4-dihydroanthracen-1-one + NADPH + H(+) = (3R)-3,8,9,10-tetrahydroxy-6-methyl-1,2,3,4-tetrahydroanthracen-1-one + NADP(+). The protein operates within secondary metabolite biosynthesis. Atrochrysone carboxylic acid synthase; part of the gene cluster that mediates the biosynthesis of the tetrahydroxanthone dimer secalonic acid D. The pathway begins with the synthesis of atrochrysone thioester by the polyketide synthase AacuL. The atrochrysone carboxyl ACP thioesterase AacuM then breaks the thioester bond and releases the atrochrysone carboxylic acid from AacuL. Atrochrysone carboxylic acid is decarboxylated by the decarboxylase AacuI, and oxidized by the anthrone oxygenase AacuG to yield emodin. Emodin is then reduced to emodin hydroquinone by a yet unidentified oxidoreductase. A-ring reduction by the short chain dehydrogenase AacuN, dehydration by the scytalone dehydratase-like protein AacuK and probable spontaneous re-oxidation, results in overall deoxygenation to chrysophanol. Baeyer-Villiger oxidation by the Baeyer-Villiger monooxygenase (BVMO) AacuH then yields monodictyphenone. Monodictyphenone is transformed into compounds with the tetrahydroxanthone skeleton via methylesterification by the methyltransferase AacuQ, followed by the action of the flavin-dependent monooxygenase AacuC, the isomerase AacuP, and the short chain dehydrogenase/reductase AacuF or AacuD. AacuF and AacuD should accept the same compound as a substrate but perform the ketoreduction with a different stereoselectivity, thus yielding blennolides B and A, respectively. In the final step of the biosynthesis, the cytochrome P450 monooxygenase AacuE accepts blennolide B and/or blennolide A to conduct the dimerization reaction to furnish the tetrahydroxanthone dimers, secalonic acids D, B, and F. The sequence is that of Short chain dehydrogenase/reductase AacuN from Aspergillus aculeatus (strain ATCC 16872 / CBS 172.66 / WB 5094).